Here is a 489-residue protein sequence, read N- to C-terminus: Pluviatolide synthase (489 aa).

Residues 6–26 (SVLGLSSTLIIALAITVIFLL) form a helical membrane-spanning segment. Cys-432 lines the heme pocket.

Belongs to the cytochrome P450 family. It depends on heme as a cofactor.

The protein resides in the membrane. The catalysed reaction is (-)-matairesinol + reduced [NADPH--hemoprotein reductase] + O2 = (-)-pluviatolide + oxidized [NADPH--hemoprotein reductase] + 2 H2O + H(+). It functions in the pathway aromatic compound metabolism; phenylpropanoid biosynthesis. Cytochrome P450 involved in the biosynthesis of etoposide, a chemotherapeutic compound of the topoisomerase inhibitor family. Catalyzes the conversion of matairesinol to pluviatolide. The protein is Pluviatolide synthase of Podophyllum peltatum (American mandrake).